Reading from the N-terminus, the 308-residue chain is tRNA-cytidine(32) 2-sulfurtransferase (308 aa).

The short motif at 39 to 44 is the PP-loop motif element; it reads SGGKDS. Residues cysteine 114, cysteine 117, and cysteine 205 each coordinate [4Fe-4S] cluster.

This sequence belongs to the TtcA family. Homodimer. Mg(2+) serves as cofactor. The cofactor is [4Fe-4S] cluster.

It is found in the cytoplasm. The enzyme catalyses cytidine(32) in tRNA + S-sulfanyl-L-cysteinyl-[cysteine desulfurase] + AH2 + ATP = 2-thiocytidine(32) in tRNA + L-cysteinyl-[cysteine desulfurase] + A + AMP + diphosphate + H(+). The protein operates within tRNA modification. Its function is as follows. Catalyzes the ATP-dependent 2-thiolation of cytidine in position 32 of tRNA, to form 2-thiocytidine (s(2)C32). The sulfur atoms are provided by the cysteine/cysteine desulfurase (IscS) system. The sequence is that of tRNA-cytidine(32) 2-sulfurtransferase from Cupriavidus taiwanensis (strain DSM 17343 / BCRC 17206 / CCUG 44338 / CIP 107171 / LMG 19424 / R1) (Ralstonia taiwanensis (strain LMG 19424)).